We begin with the raw amino-acid sequence, 118 residues long: V-type proton ATPase subunit G 1 (118 aa).

Position 2 is an N-acetylalanine (Ala-2). Residues 19-42 form a disordered region; sequence AEKVSEARKRKNRRLKQAKEEAQA.

The protein belongs to the V-ATPase G subunit family. In terms of assembly, V-ATPase is a heteromultimeric enzyme made up of two complexes: the ATP-hydrolytic V1 complex and the proton translocation V0 complex. The V1 complex consists of three catalytic AB heterodimers that form a heterohexamer, three peripheral stalks each consisting of EG heterodimers, one central rotor including subunits D and F, and the regulatory subunits C and H. The proton translocation complex V0 consists of the proton transport subunit a, a ring of proteolipid subunits c9c'', rotary subunit d, subunits e and f, and the accessory subunits ATP6AP1/Ac45 and ATP6AP2/PRR. As to expression, brain, heart, kidney and spleen.

The protein localises to the apical cell membrane. Its function is as follows. Subunit of the V1 complex of vacuolar(H+)-ATPase (V-ATPase), a multisubunit enzyme composed of a peripheral complex (V1) that hydrolyzes ATP and a membrane integral complex (V0) that translocates protons. V-ATPase is responsible for acidifying and maintaining the pH of intracellular compartments and in some cell types, is targeted to the plasma membrane, where it is responsible for acidifying the extracellular environment. In aerobic conditions, involved in intracellular iron homeostasis, thus triggering the activity of Fe(2+) prolyl hydroxylase (PHD) enzymes, and leading to HIF1A hydroxylation and subsequent proteasomal degradation. The sequence is that of V-type proton ATPase subunit G 1 (ATP6V1G1) from Bos taurus (Bovine).